We begin with the raw amino-acid sequence, 301 residues long: Mitochondrial thiamine pyrophosphate carrier 1 (301 aa).

Solcar repeat units lie at residues 15–102, 115–200, and 206–293; these read VTPT…ISKS, SSAN…AREL, and RVPF…SLSF. 6 consecutive transmembrane segments (helical) span residues 20–38, 79–99, 121–141, 172–192, 207–227, and 252–272; these read ALVAGSIAGAISRAFTAPL, VPAEILYILYGGVQFGSYSII, LIVGIGSGIVSTLVTYPFDLL, IYAGIRPAMLSVSSTTGLMFW, VPFIEAICGFIAGATSKGITF, and IFVTILKNEGVFGLYKGFGIS.

This sequence belongs to the mitochondrial carrier (TC 2.A.29) family.

The protein resides in the mitochondrion inner membrane. In terms of biological role, mitochondrial transporter that mediates uptake of thiamine pyrophosphate (ThPP) into mitochondria. The polypeptide is Mitochondrial thiamine pyrophosphate carrier 1 (TPC1) (Candida albicans (strain SC5314 / ATCC MYA-2876) (Yeast)).